A 709-amino-acid polypeptide reads, in one-letter code: Elongation factor G (709 aa).

Residues Asn-10–Leu-286 form the tr-type G domain. GTP is bound by residues Ala-19–Thr-26, Asp-83–His-87, and Asn-137–Asp-140.

Belongs to the TRAFAC class translation factor GTPase superfamily. Classic translation factor GTPase family. EF-G/EF-2 subfamily.

It localises to the cytoplasm. Catalyzes the GTP-dependent ribosomal translocation step during translation elongation. During this step, the ribosome changes from the pre-translocational (PRE) to the post-translocational (POST) state as the newly formed A-site-bound peptidyl-tRNA and P-site-bound deacylated tRNA move to the P and E sites, respectively. Catalyzes the coordinated movement of the two tRNA molecules, the mRNA and conformational changes in the ribosome. The protein is Elongation factor G of Corynebacterium glutamicum (strain R).